We begin with the raw amino-acid sequence, 287 residues long: Glycine--tRNA ligase alpha subunit (287 aa).

Belongs to the class-II aminoacyl-tRNA synthetase family. In terms of assembly, tetramer of two alpha and two beta subunits.

The protein resides in the cytoplasm. It catalyses the reaction tRNA(Gly) + glycine + ATP = glycyl-tRNA(Gly) + AMP + diphosphate. This is Glycine--tRNA ligase alpha subunit from Campylobacter jejuni subsp. jejuni serotype O:6 (strain 81116 / NCTC 11828).